Reading from the N-terminus, the 66-residue chain is Beta-mammal toxin Co1 (66 aa).

An LCN-type CS-alpha/beta domain is found at 1–66 (KEGYLVNHST…VWPLPKKTCN (66 aa)). 4 disulfides stabilise this stretch: Cys-12–Cys-65, Cys-16–Cys-41, Cys-25–Cys-46, and Cys-29–Cys-48.

Expressed by the venom gland.

It is found in the secreted. Beta toxins bind voltage-independently at site-4 of sodium channels (Nav) and shift the voltage of activation toward more negative potentials thereby affecting sodium channel activation and promoting spontaneous and repetitive firing. This toxin acts on human Nav1.6/SCN8A voltage-gated sodium channels. In vivo, is lethal to mice 40 minutes after intraperitoneal injection at a dose of 5ug. No activity is observed when injected into crickets or woodlice. The chain is Beta-mammal toxin Co1 from Centruroides ornatus (Scorpion).